We begin with the raw amino-acid sequence, 354 residues long: Protein Wnt-8a (354 aa).

Positions 1-19 are cleaved as a signal peptide; it reads MGHLLMLWVAAGMCYPALG. C54 and C65 are disulfide-bonded. Residue N103 is glycosylated (N-linked (GlcNAc...) asparagine). Cystine bridges form between C104/C112, C114/C132, C180/C194, C182/C189, C259/C297, C275/C290, C294/C336, C312/C327, C314/C324, and C319/C320. S186 is lipidated: O-palmitoleoyl serine. A glycan (N-linked (GlcNAc...) asparagine) is linked at N262.

It belongs to the Wnt family. As to quaternary structure, forms a soluble 1:1 complex with AFM; this prevents oligomerization and is required for prolonged biological activity. The complex with AFM may represent the physiological form in body fluids. Palmitoleoylation is required for efficient binding to frizzled receptors. Depalmitoleoylation leads to Wnt signaling pathway inhibition. In terms of processing, proteolytic processing by TIKI1 and TIKI2 promotes oxidation and formation of large disulfide-bond oligomers, leading to inactivation of WNT8A.

It is found in the secreted. It localises to the extracellular space. The protein localises to the extracellular matrix. Functionally, ligand for members of the frizzled family of seven transmembrane receptors. Plays a role in embryonic patterning. The sequence is that of Protein Wnt-8a (Wnt8a) from Mus musculus (Mouse).